We begin with the raw amino-acid sequence, 182 residues long: ADP-ribosylation factor-like protein 3 (182 aa).

Gly2 carries N-myristoyl glycine lipidation. GTP is bound by residues 24–31, 67–71, and 126–129; these read GLDNGGKT, DIGGQ, and NKQD.

This sequence belongs to the small GTPase superfamily. Arf family.

The protein resides in the golgi apparatus membrane. The protein localises to the cytoplasm. It is found in the cytoskeleton. Its subcellular location is the spindle. It localises to the nucleus. The protein resides in the microtubule organizing center. The protein localises to the centrosome. It is found in the cell projection. Its subcellular location is the cilium. Functionally, small GTP-binding protein which cycles between an inactive GDP-bound and an active GTP-bound form, and the rate of cycling is regulated by guanine nucleotide exchange factors (GEF) and GTPase-activating proteins (GAP). Required for normal cytokinesis and cilia signaling. Required for targeting proteins to the ciliary membrane by releasing myristoylated protein from unc119 cargo adapters into the cilium. The polypeptide is ADP-ribosylation factor-like protein 3 (arl3) (Danio rerio (Zebrafish)).